A 103-amino-acid polypeptide reads, in one-letter code: Auxin-responsive protein SAUR50 (103 aa).

This sequence belongs to the ARG7 family.

Its function is as follows. Effector of hormonal and environmental signals in plant growth. Involved in heliotropism. This Helianthus annuus (Common sunflower) protein is Auxin-responsive protein SAUR50.